The primary structure comprises 419 residues: UDP-N-acetylglucosamine 1-carboxyvinyltransferase (419 aa).

Residue 22–23 (KN) participates in phosphoenolpyruvate binding. Arg-91 is a UDP-N-acetyl-alpha-D-glucosamine binding site. Cys-115 serves as the catalytic Proton donor. 2-(S-cysteinyl)pyruvic acid O-phosphothioketal is present on Cys-115. UDP-N-acetyl-alpha-D-glucosamine contacts are provided by residues 120 to 124 (RPVDL), 160 to 163 (KVSV), Asp-305, and Val-327.

It belongs to the EPSP synthase family. MurA subfamily.

The protein localises to the cytoplasm. It carries out the reaction phosphoenolpyruvate + UDP-N-acetyl-alpha-D-glucosamine = UDP-N-acetyl-3-O-(1-carboxyvinyl)-alpha-D-glucosamine + phosphate. Its pathway is cell wall biogenesis; peptidoglycan biosynthesis. Cell wall formation. Adds enolpyruvyl to UDP-N-acetylglucosamine. The chain is UDP-N-acetylglucosamine 1-carboxyvinyltransferase from Salmonella agona (strain SL483).